Consider the following 518-residue polypeptide: Sensory neuron membrane protein 1 (518 aa).

Residues 1-8 are Cytoplasmic-facing; sequence MKTAEKLG. Residues 9 to 29 traverse the membrane as a helical segment; that stretch reads IIGTTISIFGIGFGWGVFPWL. At 30-456 the chain is on the extracellular side; that stretch reads IRMQIGRVSL…ELFRILQFLD (427 aa). 6 N-linked (GlcNAc...) asparagine glycosylation sites follow: Asn64, Asn186, Asn225, Asn316, Asn334, and Asn381. Cystine bridges form between Cys265/Cys330, Cys294/Cys349, and Cys332/Cys338. Residues 457–477 traverse the membrane as a helical segment; sequence VIKWVITLFGAGVVSGGVGLY. Over 478-518 the chain is Cytoplasmic; it reads YKEKNSLPITPTSSATSKKIDNPTDKTTTHELGHTNFGYIN.

Belongs to the CD36 family.

The protein localises to the cell membrane. Functionally, plays an olfactory role that is not restricted to pheromone sensitivity. This Pediculus humanus subsp. corporis (Body louse) protein is Sensory neuron membrane protein 1.